Here is a 475-residue protein sequence, read N- to C-terminus: Ribulose bisphosphate carboxylase large chain (475 aa).

Residues Asn-123 and Thr-173 each contribute to the substrate site. The active-site Proton acceptor is Lys-175. Substrate is bound at residue Lys-177. 3 residues coordinate Mg(2+): Lys-201, Asp-203, and Glu-204. An N6-carboxylysine modification is found at Lys-201. His-294 functions as the Proton acceptor in the catalytic mechanism. The substrate site is built by Arg-295, His-327, and Ser-379.

This sequence belongs to the RuBisCO large chain family. Type I subfamily. As to quaternary structure, heterohexadecamer of 8 large chains and 8 small chains; disulfide-linked. The disulfide link is formed within the large subunit homodimers. Interacts with assembly factor Raf1 which helps form the holoenzyme, most interaction (and folding) occurs in the cytoplasm. Mg(2+) is required as a cofactor. Post-translationally, the disulfide bond which can form in the large chain dimeric partners within the hexadecamer appears to be associated with oxidative stress and protein turnover.

It is found in the carboxysome. It localises to the cytoplasm. It carries out the reaction 2 (2R)-3-phosphoglycerate + 2 H(+) = D-ribulose 1,5-bisphosphate + CO2 + H2O. It catalyses the reaction D-ribulose 1,5-bisphosphate + O2 = 2-phosphoglycolate + (2R)-3-phosphoglycerate + 2 H(+). Its function is as follows. RuBisCO catalyzes two reactions: the carboxylation of D-ribulose 1,5-bisphosphate, the primary event in carbon dioxide fixation, as well as the oxidative fragmentation of the pentose substrate in the photorespiration process. Both reactions occur simultaneously and in competition at the same active site. The sequence is that of Ribulose bisphosphate carboxylase large chain from Thermosynechococcus vestitus (strain NIES-2133 / IAM M-273 / BP-1).